The primary structure comprises 90 residues: Acyl-CoA-binding protein homolog (90 aa).

The region spanning 3–89 is the ACB domain; that stretch reads LQEQFDQAAS…VESLIASLGL (87 aa). An acyl-CoA contacts are provided by residues arginine 15, 30-34, lysine 53, lysine 57, and tyrosine 76; that span reads YALFK.

The protein belongs to the ACBP family.

Its function is as follows. Binds medium- and long-chain acyl-CoA esters with very high affinity and may function as an intracellular carrier of acyl-CoA esters. The polypeptide is Acyl-CoA-binding protein homolog (Manduca sexta (Tobacco hawkmoth)).